The chain runs to 240 residues: MRPVVRKNFLNIEELKRFLNGQTVVSIQPVTGSPLDKTDFIVAMAIAVEQAGAKALRIEGVNNVAAVSAAVTIPIIGIVKRDLPDSPIRITPFVSDVDGLANAGATVIAFDATDRTRPESRERIAQAIKNTGCFAMADCSTFEDGLWANSQGVEIVGSTLSGYVGDIEPTVPDFQLVKAFSEAGFFTMAEGRYNTPELAAKAIESGAVAVTVGSALTRLEVVTQWFNNATQVAGERKCAH.

The protein belongs to the NanE family.

It carries out the reaction an N-acyl-D-glucosamine 6-phosphate = an N-acyl-D-mannosamine 6-phosphate. It functions in the pathway amino-sugar metabolism; N-acetylneuraminate degradation; D-fructose 6-phosphate from N-acetylneuraminate: step 3/5. In terms of biological role, converts N-acetylmannosamine-6-phosphate (ManNAc-6-P) to N-acetylglucosamine-6-phosphate (GlcNAc-6-P). The polypeptide is Putative N-acetylmannosamine-6-phosphate 2-epimerase (Vibrio cholerae serotype O1 (strain ATCC 39541 / Classical Ogawa 395 / O395)).